The primary structure comprises 930 residues: Isoleucine--tRNA ligase (930 aa).

The short motif at 57 to 67 (PYANGNIHVGH) is the 'HIGH' region element. Position 554 (Glu-554) interacts with L-isoleucyl-5'-AMP. The 'KMSKS' region motif lies at 595-599 (KMSKS). Lys-598 provides a ligand contact to ATP.

The protein belongs to the class-I aminoacyl-tRNA synthetase family. IleS type 1 subfamily. Monomer.

The protein localises to the cytoplasm. It carries out the reaction tRNA(Ile) + L-isoleucine + ATP = L-isoleucyl-tRNA(Ile) + AMP + diphosphate. Its function is as follows. Catalyzes the attachment of isoleucine to tRNA(Ile). As IleRS can inadvertently accommodate and process structurally similar amino acids such as valine, to avoid such errors it has two additional distinct tRNA(Ile)-dependent editing activities. One activity is designated as 'pretransfer' editing and involves the hydrolysis of activated Val-AMP. The other activity is designated 'posttransfer' editing and involves deacylation of mischarged Val-tRNA(Ile). This is Isoleucine--tRNA ligase from Streptococcus agalactiae serotype III (strain NEM316).